The following is a 378-amino-acid chain: Pyrimidine monooxygenase RutA (378 aa).

FMN-binding positions include Ile-65–Lys-66, Asn-131, Glu-140, Arg-156–Tyr-157, and Ser-206.

This sequence belongs to the NtaA/SnaA/DszA monooxygenase family. RutA subfamily.

The enzyme catalyses uracil + FMNH2 + NADH + O2 = (Z)-3-ureidoacrylate + FMN + NAD(+) + H2O + H(+). It catalyses the reaction thymine + FMNH2 + NADH + O2 = (Z)-2-methylureidoacrylate + FMN + NAD(+) + H2O + H(+). Functionally, catalyzes the pyrimidine ring opening between N-3 and C-4 by an unusual flavin hydroperoxide-catalyzed mechanism, adding oxygen atoms in the process to yield ureidoacrylate peracid, that immediately reacts with FMN forming ureidoacrylate and FMN-N(5)-oxide. The FMN-N(5)-oxide reacts spontaneously with NADH to produce FMN. Requires the flavin reductase RutF to regenerate FMN in vivo. This chain is Pyrimidine monooxygenase RutA, found in Cronobacter turicensis (strain DSM 18703 / CCUG 55852 / LMG 23827 / z3032).